Consider the following 465-residue polypeptide: Cysteine--tRNA ligase (465 aa).

Position 30 (Cys30) interacts with Zn(2+). Positions 32–42 (ITVYDYCHVGH) match the 'HIGH' region motif. Zn(2+)-binding residues include Cys214, His239, and Glu243. Positions 271–275 (KMSKS) match the 'KMSKS' region motif. Lys274 contributes to the ATP binding site.

The protein belongs to the class-I aminoacyl-tRNA synthetase family. As to quaternary structure, monomer. It depends on Zn(2+) as a cofactor.

It is found in the cytoplasm. The catalysed reaction is tRNA(Cys) + L-cysteine + ATP = L-cysteinyl-tRNA(Cys) + AMP + diphosphate. In Burkholderia vietnamiensis (strain G4 / LMG 22486) (Burkholderia cepacia (strain R1808)), this protein is Cysteine--tRNA ligase.